Reading from the N-terminus, the 397-residue chain is Elongation factor Tu (397 aa).

A tr-type G domain is found at 10–206; sequence KPHVNIGTIG…AVDESIPEPQ (197 aa). The tract at residues 19–26 is G1; sequence GHIDHGKT. 19–26 contacts GTP; the sequence is GHIDHGKT. Thr26 is a Mg(2+) binding site. The interval 62 to 66 is G2; that stretch reads GITIS. A G3 region spans residues 83-86; it reads DCPG. GTP contacts are provided by residues 83-87 and 138-141; these read DCPGH and NKAD. Residues 138-141 form a G4 region; it reads NKAD. The G5 stretch occupies residues 176-178; the sequence is SAL.

The protein belongs to the TRAFAC class translation factor GTPase superfamily. Classic translation factor GTPase family. EF-Tu/EF-1A subfamily. In terms of assembly, monomer.

The protein resides in the cytoplasm. The catalysed reaction is GTP + H2O = GDP + phosphate + H(+). Functionally, GTP hydrolase that promotes the GTP-dependent binding of aminoacyl-tRNA to the A-site of ribosomes during protein biosynthesis. The protein is Elongation factor Tu of Frankia casuarinae (strain DSM 45818 / CECT 9043 / HFP020203 / CcI3).